The following is a 217-amino-acid chain: 3,4-dihydroxy-2-butanone 4-phosphate synthase (217 aa).

D-ribulose 5-phosphate is bound by residues 37–38, aspartate 42, 150–154, and glutamate 174; these read RE and RGGHT. Glutamate 38 serves as a coordination point for Mg(2+). Residue histidine 153 coordinates Mg(2+).

Belongs to the DHBP synthase family. Homodimer. The cofactor is Mg(2+). Mn(2+) serves as cofactor.

The enzyme catalyses D-ribulose 5-phosphate = (2S)-2-hydroxy-3-oxobutyl phosphate + formate + H(+). It participates in cofactor biosynthesis; riboflavin biosynthesis; 2-hydroxy-3-oxobutyl phosphate from D-ribulose 5-phosphate: step 1/1. Catalyzes the conversion of D-ribulose 5-phosphate to formate and 3,4-dihydroxy-2-butanone 4-phosphate. This Salmonella heidelberg (strain SL476) protein is 3,4-dihydroxy-2-butanone 4-phosphate synthase.